The chain runs to 226 residues: Lipoprotein-releasing system ATP-binding protein LolD (226 aa).

The ABC transporter domain maps to 5–226 (LRCEKISKFY…MADGVLREAS (222 aa)). 41–48 (GSSGSGKS) lines the ATP pocket.

This sequence belongs to the ABC transporter superfamily. Lipoprotein translocase (TC 3.A.1.125) family. In terms of assembly, the complex is composed of two ATP-binding proteins (LolD) and two transmembrane proteins (LolC and LolE).

Its subcellular location is the cell inner membrane. Its function is as follows. Part of the ABC transporter complex LolCDE involved in the translocation of mature outer membrane-directed lipoproteins, from the inner membrane to the periplasmic chaperone, LolA. Responsible for the formation of the LolA-lipoprotein complex in an ATP-dependent manner. This Haemophilus ducreyi (strain 35000HP / ATCC 700724) protein is Lipoprotein-releasing system ATP-binding protein LolD.